A 455-amino-acid polypeptide reads, in one-letter code: Transmembrane protease serine 5 (455 aa).

The Cytoplasmic segment spans residues 1 to 49 (MSPTLDDQSPMEIRCTEEGAGPGIFRMELGDQRQSISQSQRWCCLQRGC). The helical; Signal-anchor for type II membrane protein transmembrane segment at 50–70 (VILGVLGLLAGAGIASWLLVL) threads the bilayer. The Extracellular segment spans residues 71-455 (YLWPAASPSI…DWIHDTVQVR (385 aa)). The SRCR domain occupies 112 to 207 (FRINGEDLLL…SGRIVSLKCS (96 aa)). 7 disulfides stabilise this stretch: C135/C196, C148/C206, C209/C328, C243/C259, C342/C411, C374/C390, and C401/C429. N-linked (GlcNAc...) asparagine glycosylation is found at N163 and N170. Residues 218–453 (IVGGQAVASG…FLDWIHDTVQ (236 aa)) enclose the Peptidase S1 domain. Active-site charge relay system residues include H258 and D308. N319 and N375 each carry an N-linked (GlcNAc...) asparagine glycan. Catalysis depends on S405, which acts as the Charge relay system.

Belongs to the peptidase S1 family.

The protein localises to the cell membrane. May play a role in hearing. The polypeptide is Transmembrane protease serine 5 (Tmprss5) (Mus musculus (Mouse)).